Consider the following 199-residue polypeptide: Recombination protein RecR (199 aa).

Residues 58 to 73 (CQTCHHLSAEPTCEIC) form a C4-type zinc finger. The 95-residue stretch at 81-175 (GQICVVADSR…RVSRIAYGLP (95 aa)) folds into the Toprim domain.

The protein belongs to the RecR family.

Functionally, may play a role in DNA repair. It seems to be involved in an RecBC-independent recombinational process of DNA repair. It may act with RecF and RecO. The protein is Recombination protein RecR of Synechococcus sp. (strain WH7803).